A 218-amino-acid chain; its full sequence is Elongation factor Ts (218 aa).

Residues 82–85 are involved in Mg(2+) ion dislocation from EF-Tu; it reads TDFV.

The protein belongs to the EF-Ts family.

Its subcellular location is the cytoplasm. Associates with the EF-Tu.GDP complex and induces the exchange of GDP to GTP. It remains bound to the aminoacyl-tRNA.EF-Tu.GTP complex up to the GTP hydrolysis stage on the ribosome. This chain is Elongation factor Ts, found in Prochlorococcus marinus (strain MIT 9301).